Consider the following 149-residue polypeptide: Inner membrane protein YdcZ (149 aa).

Residues 1 to 4 (MNQS) are Periplasmic-facing. A helical transmembrane segment spans residues 5–25 (LTLAFLIAAGIGLVVQNTLMV). The Cytoplasmic portion of the chain corresponds to 26 to 33 (RITQTSST). The chain crosses the membrane as a helical span at residues 34–54 (ILIAMLLNSLVGIVLFVSILW). Residues 55–70 (FKQGMAGFGELVSSVR) are Periplasmic-facing. The chain crosses the membrane as a helical span at residues 71–91 (WWTLIPGLLGSFFVFASISGY). The Cytoplasmic portion of the chain corresponds to 92–93 (QN). The chain crosses the membrane as a helical span at residues 94–114 (VGAATTIAVLVASQLIGGLML). Residues 115–123 (DIFRSHGVP) lie on the Periplasmic side of the membrane. The chain crosses the membrane as a helical span at residues 124–144 (LRALFGPICGAILLVVGAWLV). Topologically, residues 145 to 149 (ARRSF) are cytoplasmic.

It localises to the cell inner membrane. This Escherichia coli (strain K12) protein is Inner membrane protein YdcZ (ydcZ).